The following is a 282-amino-acid chain: 5'-nucleotidase SurE (282 aa).

A divalent metal cation contacts are provided by Asp12, Asp13, Ser43, and Asn98.

It belongs to the SurE nucleotidase family. The cofactor is a divalent metal cation.

The protein localises to the cytoplasm. It catalyses the reaction a ribonucleoside 5'-phosphate + H2O = a ribonucleoside + phosphate. In terms of biological role, nucleotidase that shows phosphatase activity on nucleoside 5'-monophosphates. This is 5'-nucleotidase SurE from Hyperthermus butylicus (strain DSM 5456 / JCM 9403 / PLM1-5).